We begin with the raw amino-acid sequence, 729 residues long: Catalase-peroxidase (729 aa).

The segment at residues 95-217 is a cross-link (tryptophyl-tyrosyl-methioninium (Trp-Tyr) (with M-243)); the sequence is WHSAGTYRIT…LAAVQMGLIY (123 aa). Catalysis depends on histidine 96, which acts as the Proton acceptor. A cross-link (tryptophyl-tyrosyl-methioninium (Tyr-Met) (with W-95)) is located at residues 217–243; that stretch reads YVNPEGPNGKPDPIAAATDIRETFFRM. Residue histidine 258 participates in heme b binding.

It belongs to the peroxidase family. Peroxidase/catalase subfamily. Homodimer or homotetramer. Heme b serves as cofactor. Post-translationally, formation of the three residue Trp-Tyr-Met cross-link is important for the catalase, but not the peroxidase activity of the enzyme.

It catalyses the reaction H2O2 + AH2 = A + 2 H2O. The catalysed reaction is 2 H2O2 = O2 + 2 H2O. Functionally, bifunctional enzyme with both catalase and broad-spectrum peroxidase activity. This is Catalase-peroxidase from Nitrobacter hamburgensis (strain DSM 10229 / NCIMB 13809 / X14).